The following is a 239-amino-acid chain: Myogenic factor 6 (239 aa).

A disordered region spans residues 27-64 (QHLDMPGVSPLYDGNHSPLSPGPDNVPSETGGESSGDE). Residues 96 to 147 (DRRKAATLRERRRLKKINEAFDALKRKSVANPNQRLPKVEILRSAISYIERL) enclose the bHLH domain. Residues 155–184 (DEQERGQSGASDTRNDKEQNRPSGGDYCWK) are disordered.

Efficient DNA binding requires dimerization with another bHLH protein.

It is found in the nucleus. Its function is as follows. Involved in muscle differentiation (myogenic factor). Induces fibroblasts to differentiate into myoblasts. Probable sequence specific DNA-binding protein. The chain is Myogenic factor 6 (myf6) from Tetraodon nigroviridis (Spotted green pufferfish).